A 172-amino-acid chain; its full sequence is Large ribosomal subunit protein uL10 (172 aa).

The protein belongs to the universal ribosomal protein uL10 family. In terms of assembly, part of the ribosomal stalk of the 50S ribosomal subunit. The N-terminus interacts with L11 and the large rRNA to form the base of the stalk. The C-terminus forms an elongated spine to which L12 dimers bind in a sequential fashion forming a multimeric L10(L12)X complex.

Functionally, forms part of the ribosomal stalk, playing a central role in the interaction of the ribosome with GTP-bound translation factors. In Liberibacter africanus subsp. capensis, this protein is Large ribosomal subunit protein uL10 (rplJ).